A 195-amino-acid polypeptide reads, in one-letter code: Protein GrpE (195 aa).

The disordered stretch occupies residues 1–30 (MSEQEKVEQEEISAELETQNEQEKPMEETE). Positions 10–20 (EEISAELETQN) are enriched in acidic residues.

The protein belongs to the GrpE family. Homodimer.

The protein localises to the cytoplasm. In terms of biological role, participates actively in the response to hyperosmotic and heat shock by preventing the aggregation of stress-denatured proteins, in association with DnaK and GrpE. It is the nucleotide exchange factor for DnaK and may function as a thermosensor. Unfolded proteins bind initially to DnaJ; upon interaction with the DnaJ-bound protein, DnaK hydrolyzes its bound ATP, resulting in the formation of a stable complex. GrpE releases ADP from DnaK; ATP binding to DnaK triggers the release of the substrate protein, thus completing the reaction cycle. Several rounds of ATP-dependent interactions between DnaJ, DnaK and GrpE are required for fully efficient folding. This Histophilus somni (strain 2336) (Haemophilus somnus) protein is Protein GrpE.